We begin with the raw amino-acid sequence, 330 residues long: Ketol-acid reductoisomerase (NADP(+)) (330 aa).

Residues 1-181 enclose the KARI N-terminal Rossmann domain; it reads MNIYYEQDAD…GGTKAGVIET (181 aa). NADP(+)-binding positions include 24 to 27, K47, S50, S52, and 82 to 85; these read YGSQ and DQTQ. H107 is a catalytic residue. G133 serves as a coordination point for NADP(+). The region spanning 182–327 is the KARI C-terminal knotted domain; it reads SFKDETETDL…AKLRGMMSWL (146 aa). Mg(2+) is bound by residues D190, E194, E226, and E230. S251 serves as a coordination point for substrate.

Belongs to the ketol-acid reductoisomerase family. It depends on Mg(2+) as a cofactor.

The catalysed reaction is (2R)-2,3-dihydroxy-3-methylbutanoate + NADP(+) = (2S)-2-acetolactate + NADPH + H(+). The enzyme catalyses (2R,3R)-2,3-dihydroxy-3-methylpentanoate + NADP(+) = (S)-2-ethyl-2-hydroxy-3-oxobutanoate + NADPH + H(+). It participates in amino-acid biosynthesis; L-isoleucine biosynthesis; L-isoleucine from 2-oxobutanoate: step 2/4. It functions in the pathway amino-acid biosynthesis; L-valine biosynthesis; L-valine from pyruvate: step 2/4. In terms of biological role, involved in the biosynthesis of branched-chain amino acids (BCAA). Catalyzes an alkyl-migration followed by a ketol-acid reduction of (S)-2-acetolactate (S2AL) to yield (R)-2,3-dihydroxy-isovalerate. In the isomerase reaction, S2AL is rearranged via a Mg-dependent methyl migration to produce 3-hydroxy-3-methyl-2-ketobutyrate (HMKB). In the reductase reaction, this 2-ketoacid undergoes a metal-dependent reduction by NADPH to yield (R)-2,3-dihydroxy-isovalerate. This Chlorobaculum tepidum (strain ATCC 49652 / DSM 12025 / NBRC 103806 / TLS) (Chlorobium tepidum) protein is Ketol-acid reductoisomerase (NADP(+)).